A 465-amino-acid polypeptide reads, in one-letter code: MRFAPSPTGMFHVGGARSALQNWIFAKQQGGVFVLRVEDTDAARNKPEWTEGILAALEWIGIARGSYEGPYFQSSYATEHRAAASRLHEGGRAYYCDCTREVVQARTGSPHTGYDGFCRDRNLGPGAGRALRFRTPDEGATVVVDLIRGEPTFDNRLIEDFVIARSDGSPVFLLANVVDDMTMGITHVIRAEEHLPNTPKQQLLWDALGVKPPVWAHVPVVVNEKRQKLSKRRDKVALEAYRDEGYLADAMCNYLMLLGWAPSGDREIVPWPVIEEEFRLEEVNPSSAFFDEKKLRAFNGEYIRALPIAEFIAGCQPWLTGTATIAPPPWQPDEFDAEAFAAVAPLAQTRIAVLSEIVPNVDFLFLDSPLIDEGAWAKAMKEGAGDLLDAVIAAFTALPSWDADSTKSTLEAVGAEHGLKLGKAQAPVRVAVTGRRVGLPLFESLEVLGRERTLTRLRAARLRLP.

Residues 5–15 (PSPTGMFHVGG) carry the 'HIGH' region motif. C96, C98, C118, and D120 together coordinate Zn(2+). The short motif at 228–232 (KLSKR) is the 'KMSKS' region element. ATP is bound at residue K231.

It belongs to the class-I aminoacyl-tRNA synthetase family. Glutamate--tRNA ligase type 1 subfamily. Monomer. It depends on Zn(2+) as a cofactor.

Its subcellular location is the cytoplasm. It carries out the reaction tRNA(Glu) + L-glutamate + ATP = L-glutamyl-tRNA(Glu) + AMP + diphosphate. Functionally, catalyzes the attachment of glutamate to tRNA(Glu) in a two-step reaction: glutamate is first activated by ATP to form Glu-AMP and then transferred to the acceptor end of tRNA(Glu). The sequence is that of Glutamate--tRNA ligase from Salinispora tropica (strain ATCC BAA-916 / DSM 44818 / JCM 13857 / NBRC 105044 / CNB-440).